Reading from the N-terminus, the 466-residue chain is ATP-dependent protease ATPase subunit HslU (466 aa).

Residues I18, 60 to 65, D279, E344, and R416 each bind ATP; that span reads GVGKTE.

It belongs to the ClpX chaperone family. HslU subfamily. A double ring-shaped homohexamer of HslV is capped on each side by a ring-shaped HslU homohexamer. The assembly of the HslU/HslV complex is dependent on binding of ATP.

It localises to the cytoplasm. Its function is as follows. ATPase subunit of a proteasome-like degradation complex; this subunit has chaperone activity. The binding of ATP and its subsequent hydrolysis by HslU are essential for unfolding of protein substrates subsequently hydrolyzed by HslV. HslU recognizes the N-terminal part of its protein substrates and unfolds these before they are guided to HslV for hydrolysis. The protein is ATP-dependent protease ATPase subunit HslU of Syntrophomonas wolfei subsp. wolfei (strain DSM 2245B / Goettingen).